The following is a 135-amino-acid chain: NADH-quinone oxidoreductase subunit K (135 aa).

Helical transmembrane passes span 33–53 (VLGLIPMSHGLILAGILFAIG), 63–83 (FLFMLMSLEIMMNAAALAFVV), and 95–115 (IMFIFILTLAAAEAAIGLAIL).

It belongs to the complex I subunit 4L family. In terms of assembly, NDH-1 is composed of 14 different subunits. Subunits NuoA, H, J, K, L, M, N constitute the membrane sector of the complex.

It is found in the cell inner membrane. The enzyme catalyses a quinone + NADH + 5 H(+)(in) = a quinol + NAD(+) + 4 H(+)(out). NDH-1 shuttles electrons from NADH, via FMN and iron-sulfur (Fe-S) centers, to quinones in the respiratory chain. The immediate electron acceptor for the enzyme in this species is believed to be ubiquinone. Couples the redox reaction to proton translocation (for every two electrons transferred, four hydrogen ions are translocated across the cytoplasmic membrane), and thus conserves the redox energy in a proton gradient. The polypeptide is NADH-quinone oxidoreductase subunit K (Psychrobacter arcticus (strain DSM 17307 / VKM B-2377 / 273-4)).